The sequence spans 184 residues: Leucine-rich repeat-containing protein 20 (184 aa).

LRR repeat units follow at residues 23–44 (GSDTLDLADCKLVSFPICIYKV), 51–72 (QIHLITLANNELKSLTSKFMTT), 75–96 (QLRELRLEGNYLFRLPNEVSSL), 98–120 (HLRAIDLSRNQFQDFPEQLTTLP), 121–141 (ALETINLEENEIVDVPVEKLA), and 145–167 (ALRVINLRLNPLSADVRVIAPPL). Serine 175 carries the post-translational modification Phosphoserine.

The protein is Leucine-rich repeat-containing protein 20 (Lrrc20) of Mus musculus (Mouse).